The primary structure comprises 465 residues: Kynureninase (465 aa).

M1 is subject to N-acetylmethionine. Pyridoxal 5'-phosphate is bound by residues L137, T138, F165–D168, S221, D250, H253, and Y275. Position 276 is an N6-(pyridoxal phosphate)lysine (K276). 2 residues coordinate pyridoxal 5'-phosphate: W305 and N333.

The protein belongs to the kynureninase family. In terms of assembly, homodimer. It depends on pyridoxal 5'-phosphate as a cofactor. In terms of tissue distribution, expressed in all tissues tested (heart, brain placenta, lung, liver, skeletal muscle, kidney and pancreas). Highest levels found in placenta, liver and lung. Expressed in all brain regions.

It is found in the cytoplasm. The protein localises to the cytosol. It catalyses the reaction L-kynurenine + H2O = anthranilate + L-alanine + H(+). The enzyme catalyses 3-hydroxy-L-kynurenine + H2O = 3-hydroxyanthranilate + L-alanine + H(+). It functions in the pathway amino-acid degradation; L-kynurenine degradation; L-alanine and anthranilate from L-kynurenine: step 1/1. The protein operates within cofactor biosynthesis; NAD(+) biosynthesis; quinolinate from L-kynurenine: step 2/3. With respect to regulation, inhibited by o-methoxybenzoylalanine (OMBA). Catalyzes the cleavage of L-kynurenine (L-Kyn) and L-3-hydroxykynurenine (L-3OHKyn) into anthranilic acid (AA) and 3-hydroxyanthranilic acid (3-OHAA), respectively. Has a preference for the L-3-hydroxy form. Also has cysteine-conjugate-beta-lyase activity. The polypeptide is Kynureninase (Homo sapiens (Human)).